The following is a 440-amino-acid chain: Trigger factor (440 aa).

The PPIase FKBP-type domain occupies 163 to 248 (GDTVNIDFDG…INEIKYKNVP (86 aa)).

This sequence belongs to the FKBP-type PPIase family. Tig subfamily.

Its subcellular location is the cytoplasm. It catalyses the reaction [protein]-peptidylproline (omega=180) = [protein]-peptidylproline (omega=0). Functionally, involved in protein export. Acts as a chaperone by maintaining the newly synthesized protein in an open conformation. Functions as a peptidyl-prolyl cis-trans isomerase. The chain is Trigger factor from Staphylococcus carnosus (strain TM300).